A 473-amino-acid polypeptide reads, in one-letter code: RUN domain-containing protein 3B (473 aa).

The tract at residues 1–24 (MASRSLGGLSGIRGGGGGGGKKSL) is disordered. Residues 8–21 (GLSGIRGGGGGGGK) show a composition bias toward gly residues. Position 13 is an omega-N-methylarginine (R13). Residues 57–206 (DDSSPEFNNF…IDFSFCLKGE (150 aa)) enclose the RUN domain. A phosphoserine mark is found at S232 and S233. Positions 317–342 (AHKLEKEQLEYIIVELQDQLTVLKNN) form a coiled coil. Polar residues predominate over residues 399 to 422 (SLSQTSLDPGQSQEGDGKQDTLNV). A disordered region spans residues 399-428 (SLSQTSLDPGQSQEGDGKQDTLNVMSEGKE).

It belongs to the RUNDC3 family. In terms of assembly, interacts with RAP2A. As to expression, isoform 2 is expressed at high levels in brain, thymus, ovary, testis, leukocyte, liver, small intestine and prostate. Isoform 1 is expressed in the brain, testis and adrenal gland. It is activated in tumorigenic breast cancer cell lines and in the primary tumor of breast cancer patients. Activation also correlates with metastatic lymph node invasion and can be detected in metastatic epithelial cells from the lymph nodes and in the bone marrow of patients.

The sequence is that of RUN domain-containing protein 3B (RUNDC3B) from Homo sapiens (Human).